A 150-amino-acid polypeptide reads, in one-letter code: Large ribosomal subunit protein bL9 (150 aa).

The protein belongs to the bacterial ribosomal protein bL9 family.

In terms of biological role, binds to the 23S rRNA. The chain is Large ribosomal subunit protein bL9 from Moorella thermoacetica (strain ATCC 39073 / JCM 9320).